A 293-amino-acid chain; its full sequence is Protein phosphatase 1 regulatory subunit 3B (293 aa).

The CBM21 domain occupies 129–237 (RQRIENDHVC…NNQGKNYRII (109 aa)).

As to quaternary structure, interacts with glycogen, PPP1CC catalytic subunit of PP1 and PYGL. Associates with glycogen particles. Forms complexes with debranching enzyme, glycogen phosphorylase, glycogen synthase and phosphorylase kinase which is necessary for its regulation of PP1 activity.

Functionally, acts as a glycogen-targeting subunit for phosphatase PP1. Facilitates interaction of the PP1 with enzymes of the glycogen metabolism and regulates its activity. Suppresses the rate at which PP1 dephosphorylates (inactivates) glycogen phosphorylase and enhances the rate at which it activates glycogen synthase and therefore limits glycogen breakdown. The chain is Protein phosphatase 1 regulatory subunit 3B (ppp1r3b) from Danio rerio (Zebrafish).